Here is a 31-residue protein sequence, read N- to C-terminus: MEALVYTFLLIGTLGIIFFAIFFREPPRMVK.

The chain crosses the membrane as a helical span at residues 3–23 (ALVYTFLLIGTLGIIFFAIFF).

The protein belongs to the PsbT family. PSII is composed of 1 copy each of membrane proteins PsbA, PsbB, PsbC, PsbD, PsbE, PsbF, PsbH, PsbI, PsbJ, PsbK, PsbL, PsbM, PsbT, PsbY, PsbZ, Psb30/Ycf12, at least 3 peripheral proteins of the oxygen-evolving complex and a large number of cofactors. It forms dimeric complexes.

Its subcellular location is the plastid. It localises to the chloroplast thylakoid membrane. Functionally, found at the monomer-monomer interface of the photosystem II (PS II) dimer, plays a role in assembly and dimerization of PSII. PSII is a light-driven water plastoquinone oxidoreductase, using light energy to abstract electrons from H(2)O, generating a proton gradient subsequently used for ATP formation. The sequence is that of Photosystem II reaction center protein T from Tetradesmus obliquus (Green alga).